Reading from the N-terminus, the 385-residue chain is Beta-lactamase (385 aa).

An N-terminal signal peptide occupies residues 1–20; that stretch reads MKRLLAFCLLFFAALGQAKV. Ser-84 functions as the Acyl-ester intermediate in the catalytic mechanism. Catalysis depends on Tyr-170, which acts as the Proton acceptor. 335–337 is a substrate binding site; sequence KTG.

It belongs to the class-C beta-lactamase family.

The protein resides in the periplasm. The catalysed reaction is a beta-lactam + H2O = a substituted beta-amino acid. Its function is as follows. This protein is a serine beta-lactamase with a substrate specificity for cephalosporins. This chain is Beta-lactamase, found in Lysobacter lactamgenus.